We begin with the raw amino-acid sequence, 425 residues long: Probable mannosyltransferase KTR2 (425 aa).

Topologically, residues 1–13 are cytoplasmic; the sequence is MQICKVFLTQVKK. Residues 14–33 traverse the membrane as a helical; Signal-anchor for type II membrane protein segment; the sequence is LLFVSLLFCLIAQTCWLALV. The interval 34–89 is stem region; the sequence is PYQRQLSLDSYFFRRSREVSSRYDFTRRRHMNQTLKLSSNTYNDEPLNKTKGIKNQ. Over 34-425 the chain is Lumenal; the sequence is PYQRQLSLDS…SGKYFLKHDS (392 aa). 4 N-linked (GlcNAc...) asparagine glycosylation sites follow: Asn-65, Asn-81, Asn-92, and Asn-167. Residues 90–425 are catalytic; that stretch reads RENATLLMLV…SGKYFLKHDS (336 aa). Glu-313 functions as the Nucleophile in the catalytic mechanism.

The protein belongs to the glycosyltransferase 15 family.

The protein resides in the golgi apparatus membrane. Its pathway is protein modification; protein glycosylation. In terms of biological role, involved in N-linked glycosylation. Transfers an alpha-D-mannosyl residue from GDP-mannose into lipid-linked oligosaccharide, forming an alpha-(1-&gt;2)-D-mannosyl-D-mannose linkage. This chain is Probable mannosyltransferase KTR2 (KTR2), found in Saccharomyces cerevisiae (strain ATCC 204508 / S288c) (Baker's yeast).